The sequence spans 101 residues: Small ribosomal subunit protein uS14 (101 aa).

This sequence belongs to the universal ribosomal protein uS14 family. As to quaternary structure, part of the 30S ribosomal subunit. Contacts proteins S3 and S10.

In terms of biological role, binds 16S rRNA, required for the assembly of 30S particles and may also be responsible for determining the conformation of the 16S rRNA at the A site. This chain is Small ribosomal subunit protein uS14, found in Cellvibrio japonicus (strain Ueda107) (Pseudomonas fluorescens subsp. cellulosa).